The chain runs to 289 residues: Leucine--tRNA ligase subunit beta (289 aa).

A 'KMSKS' region motif is present at residues 45–49 (KMSKS). Lys-48 provides a ligand contact to ATP.

Belongs to the class-I aminoacyl-tRNA synthetase family. In terms of assembly, seems to consist of an alpha chain and a beta chain.

The protein resides in the cytoplasm. The enzyme catalyses tRNA(Leu) + L-leucine + ATP = L-leucyl-tRNA(Leu) + AMP + diphosphate. In Aquifex aeolicus (strain VF5), this protein is Leucine--tRNA ligase subunit beta (leuS').